Reading from the N-terminus, the 372-residue chain is MTSIEPTHTGKKVIVGMSGGVDSSVSAYLLMQQGYQVEGLFMKNWEEDDNDEYCAAAEDLKDAQAVCDKLGIKLHTVNFAAEYWDNVFEYFLAEYKAGRTPNPDIMCNKEIKFKAFLDFADDILDADYIAMGHYVRRRDNADGTTQMLRGVDNNKDQSYFLYTLSHEQVARSLFPVGELEKHEVREIAKKMGLITHDKKDSTGICFIGERKFTEFLGNYLPAQPGNIETAEGEVIGKHQGLMYHTLGQRKGLGIGGMKNSNDDPWYVVDKDLKRNVLVVGQGGHHPRLMSNGMLVNQLHWVDRKGPAEGSQIVVKTRYRQQDIPCTLTYLDDNTLKVVFDEPVAAVTPGQSAVFYDGEVCLGGGIIDQLIRG.

Residues 16–23 and Met-42 each bind ATP; that span reads GMSGGVDS. The tract at residues 102 to 104 is interaction with target base in tRNA; that stretch reads NPD. Cys-107 functions as the Nucleophile in the catalytic mechanism. Cys-107 and Cys-205 are disulfide-bonded. Gly-132 lines the ATP pocket. Residues 155–157 are interaction with tRNA; it reads KDQ. Catalysis depends on Cys-205, which acts as the Cysteine persulfide intermediate. The tract at residues 317 to 318 is interaction with tRNA; sequence RY.

The protein belongs to the MnmA/TRMU family.

The protein localises to the cytoplasm. It catalyses the reaction S-sulfanyl-L-cysteinyl-[protein] + uridine(34) in tRNA + AH2 + ATP = 2-thiouridine(34) in tRNA + L-cysteinyl-[protein] + A + AMP + diphosphate + H(+). In terms of biological role, catalyzes the 2-thiolation of uridine at the wobble position (U34) of tRNA, leading to the formation of s(2)U34. The chain is tRNA-specific 2-thiouridylase MnmA from Shewanella sp. (strain MR-4).